The following is a 697-amino-acid chain: Protein arginine N-methyltransferase 7 (697 aa).

SAM-dependent MTase PRMT-type domains are found at residues 14–357 (QNTW…YSLW) and 366–697 (EQPA…EETK).

It belongs to the class I-like SAM-binding methyltransferase superfamily. Protein arginine N-methyltransferase family. PRMT7 subfamily.

Functionally, essential arginine methyltransferase that can both catalyze the formation of omega-N monomethylarginine (MMA) and symmetrical dimethylarginine (sDMA). Specifically mediates the symmetrical dimethylation of arginine residues in the small nuclear ribonucleoproteins SmD1 and SmD3. The sequence is that of Protein arginine N-methyltransferase 7 (Art7) from Drosophila virilis (Fruit fly).